Here is a 218-residue protein sequence, read N- to C-terminus: 5-oxoprolinase subunit B (218 aa).

It belongs to the PxpB family. As to quaternary structure, forms a complex composed of PxpA, PxpB and PxpC.

It carries out the reaction 5-oxo-L-proline + ATP + 2 H2O = L-glutamate + ADP + phosphate + H(+). Its function is as follows. Catalyzes the cleavage of 5-oxoproline to form L-glutamate coupled to the hydrolysis of ATP to ADP and inorganic phosphate. The polypeptide is 5-oxoprolinase subunit B (Escherichia coli O157:H7).